The chain runs to 60 residues: U-scutigerotoxin(02)-Tl4a (60 aa).

It belongs to the scutigerotoxin-02 family. In terms of processing, contains 3 disulfide bonds. In terms of tissue distribution, expressed by the venom gland.

Its subcellular location is the secreted. This is U-scutigerotoxin(02)-Tl4a from Thereuopoda longicornis (Long-legged centipede).